The chain runs to 184 residues: tRNA (cytidine(56)-2'-O)-methyltransferase (184 aa).

Residues leucine 87, 112–116, and 130–137 contribute to the S-adenosyl-L-methionine site; these read GAEKV and VANQPHSE.

Belongs to the aTrm56 family. Homodimer.

The protein localises to the cytoplasm. It catalyses the reaction cytidine(56) in tRNA + S-adenosyl-L-methionine = 2'-O-methylcytidine(56) in tRNA + S-adenosyl-L-homocysteine + H(+). In terms of biological role, specifically catalyzes the AdoMet-dependent 2'-O-ribose methylation of cytidine at position 56 in tRNAs. The chain is tRNA (cytidine(56)-2'-O)-methyltransferase from Methanocorpusculum labreanum (strain ATCC 43576 / DSM 4855 / Z).